A 217-amino-acid polypeptide reads, in one-letter code: uncharacterized protein (217 aa).

The disordered stretch occupies residues 1 to 32 (MTLKKHRGKMSEKSNVNKKFTNSTQNNSNWSN). The segment covering 22–32 (NSTQNNSNWSN) has biased composition (low complexity).

This is an uncharacterized protein from Acidianus filamentous virus 2 (isolate Italy/Pozzuoli) (AFV-2).